Here is a 463-residue protein sequence, read N- to C-terminus: Methionine aminopeptidase 2-2 (463 aa).

A disordered region spans residues 1 to 107; that stretch reads MGAKTFEGGD…VPLSQLFPDG (107 aa). Positions 37-53 are enriched in acidic residues; the sequence is EDGDGEFGTDDDDDGDG. Over residues 69–83 the composition is skewed to basic residues; sequence PKKRKRSKKKKSNKK. Histidine 215 lines the substrate pocket. Positions 236, 247, and 316 each coordinate a divalent metal cation. Histidine 324 is a substrate binding site. Positions 349 and 444 each coordinate a divalent metal cation.

The protein belongs to the peptidase M24A family. Methionine aminopeptidase eukaryotic type 2 subfamily. Requires Co(2+) as cofactor. The cofactor is Zn(2+). It depends on Mn(2+) as a cofactor. Fe(2+) serves as cofactor.

The protein localises to the cytoplasm. The catalysed reaction is Release of N-terminal amino acids, preferentially methionine, from peptides and arylamides.. In terms of biological role, cotranslationally removes the N-terminal methionine from nascent proteins. The N-terminal methionine is often cleaved when the second residue in the primary sequence is small and uncharged (Met-Ala-, Cys, Gly, Pro, Ser, Thr, or Val). This Talaromyces marneffei (strain ATCC 18224 / CBS 334.59 / QM 7333) (Penicillium marneffei) protein is Methionine aminopeptidase 2-2.